A 344-amino-acid chain; its full sequence is N-acetyl-gamma-glutamyl-phosphate reductase 1 (344 aa).

The active site involves Cys-150.

Belongs to the NAGSA dehydrogenase family. Type 1 subfamily.

It localises to the cytoplasm. The enzyme catalyses N-acetyl-L-glutamate 5-semialdehyde + phosphate + NADP(+) = N-acetyl-L-glutamyl 5-phosphate + NADPH + H(+). Its pathway is amino-acid biosynthesis; L-arginine biosynthesis; N(2)-acetyl-L-ornithine from L-glutamate: step 3/4. In terms of biological role, catalyzes the NADPH-dependent reduction of N-acetyl-5-glutamyl phosphate to yield N-acetyl-L-glutamate 5-semialdehyde. The protein is N-acetyl-gamma-glutamyl-phosphate reductase 1 of Pseudomonas putida (strain ATCC 47054 / DSM 6125 / CFBP 8728 / NCIMB 11950 / KT2440).